We begin with the raw amino-acid sequence, 155 residues long: Sec-independent protein translocase protein TatB (155 aa).

A helical transmembrane segment spans residues 1 to 21; it reads MIDLGISKIALIGAVALIVIG. 2 disordered regions span residues 81–103 and 131–155; these read ASDF…LPGF and SGIR…SRKA. Residues 89 to 98 are compositionally biased toward polar residues; the sequence is SETTGSTSSD.

This sequence belongs to the TatB family. As to quaternary structure, the Tat system comprises two distinct complexes: a TatABC complex, containing multiple copies of TatA, TatB and TatC subunits, and a separate TatA complex, containing only TatA subunits. Substrates initially bind to the TatABC complex, which probably triggers association of the separate TatA complex to form the active translocon.

The protein resides in the cell inner membrane. Part of the twin-arginine translocation (Tat) system that transports large folded proteins containing a characteristic twin-arginine motif in their signal peptide across membranes. Together with TatC, TatB is part of a receptor directly interacting with Tat signal peptides. TatB may form an oligomeric binding site that transiently accommodates folded Tat precursor proteins before their translocation. The polypeptide is Sec-independent protein translocase protein TatB (Polaromonas naphthalenivorans (strain CJ2)).